We begin with the raw amino-acid sequence, 522 residues long: Protein DETOXIFICATION 31 (522 aa).

12 consecutive transmembrane segments (helical) span residues 89–109 (GAVT…AVSI), 113–133 (VIAG…ETLC), 154–174 (VILS…APIL), 183–203 (ISAM…AYAI), 217–237 (IMVM…FTWL), 249–269 (LALV…VYIF), 299–319 (AAML…AGYL), 324–344 (VSVA…MVAF), 371–391 (VVAV…LLFF), 415–435 (MLAF…VAVG), 441–461 (VVAY…GLLL), and 471–491 (GIWW…TWMI).

The protein belongs to the multi antimicrobial extrusion (MATE) (TC 2.A.66.1) family.

Its subcellular location is the membrane. In terms of biological role, positively mediates root hair elongation. The protein is Protein DETOXIFICATION 31 of Arabidopsis thaliana (Mouse-ear cress).